The primary structure comprises 293 residues: MSLEEDIVSDDEMNMIDEDDATDSEAESLSDSDTENEITEKLAEPTKTAIYNRDGLLDKLQDISWPEDVDWTHKLTVEIDQGGAVDVNDDLARETAFYTQALEGTREAFGKLNEMGVNFLRPANYYAEMVKSDVHMEKVKSRLLHEKKQIEESEERRKARDNKRMAKEVQSQKMKERAKEKKDNIESVKKWRKQRQQSGFSDKAGEPELDFESGKSFQRGGGKKRPGVSPGDRSGGKGRPTSRMGNKKREFRDSKFGHGGRKGLSKQNTAETTNDFKGGFRGGKASGNKRQKR.

Acidic residues predominate over residues 1–37 (MSLEEDIVSDDEMNMIDEDDATDSEAESLSDSDTENE). Disordered regions lie at residues 1–45 (MSLE…LAEP) and 150–293 (IEES…RQKR). Positions 135-190 (HMEKVKSRLLHEKKQIEESEERRKARDNKRMAKEVQSQKMKERAKEKKDNIESVKK) form a coiled coil. Basic and acidic residues-rich tracts occupy residues 150 to 167 (IEES…RMAK), 173 to 189 (KMKE…ESVK), and 247 to 256 (KKREFRDSKF). Positions 265 to 275 (SKQNTAETTND) are enriched in polar residues.

The protein belongs to the EBP2 family. As to quaternary structure, interacts with NSN1.

The protein localises to the nucleus. Its subcellular location is the nucleolus. In terms of biological role, required for the processing of the 27S pre-rRNA. Plays an important role in plant growth and senescence by modulating ribosome biogenesis in nucleolus. Associates with ribosomes. In Arabidopsis thaliana (Mouse-ear cress), this protein is Probable rRNA-processing protein EBP2 homolog.